A 1429-amino-acid chain; its full sequence is Autophagy-related protein 11 (1429 aa).

The disordered stretch occupies residues 71-99 (TQRSQPGASSPPLSELPLPRYNAHTPPNS). A compositionally biased stretch (low complexity) spans 80-89 (SPPLSELPLP). 4 coiled-coil regions span residues 143 to 173 (VMLR…KEWS), 553 to 590 (DDLL…QTQA), 632 to 815 (LETL…LEDI), and 851 to 989 (EGDM…RLES). The disordered stretch occupies residues 1024 to 1061 (DGTMHIQRTPRSERSLATTANPNDSDPSSSLRRSSTLN). Residues 1042-1061 (TANPNDSDPSSSLRRSSTLN) are compositionally biased toward low complexity. A coiled-coil region spans residues 1105-1143 (ADAVYRRVKDVEHMARKLQREARAYREKAHSFQKEAHDK). Over residues 1209-1229 (SKSLQHDQAGETRKDGARGET) the composition is skewed to basic and acidic residues. 2 disordered regions span residues 1209–1241 (SKSL…DNPF) and 1336–1429 (SSRG…LIGP). Over residues 1230–1239 (ESLDDDENDN) the composition is skewed to acidic residues. Polar residues-rich tracts occupy residues 1345–1372 (ASET…QHMS) and 1383–1393 (QETPQQTNSIS).

It belongs to the ATG11 family. In terms of assembly, homodimer.

The protein localises to the preautophagosomal structure membrane. It is found in the vacuole membrane. Functionally, involved in cytoplasm to vacuole transport (Cvt), pexophagy, mitophagy and nucleophagy. Recruits mitochondria for their selective degradation via autophagy (mitophagy) during starvation. Works as scaffold proteins that recruit ATG proteins to the pre-autophagosome (PAS), the site of vesicle/autophagosome formation. Required for the Cvt vesicles completion. In Neurospora crassa (strain ATCC 24698 / 74-OR23-1A / CBS 708.71 / DSM 1257 / FGSC 987), this protein is Autophagy-related protein 11 (apg-8).